A 127-amino-acid chain; its full sequence is Thioredoxin-3, mitochondrial (127 aa).

The transit peptide at 1–21 (MLFYKPVMRMAVRPLKSIRFQ) directs the protein to the mitochondrion. Residues 22-127 (SSYTSITKLT…TALEKGIKDL (106 aa)) enclose the Thioredoxin domain. Residues C55 and C58 each act as nucleophile in the active site. A disulfide bond links C55 and C58.

This sequence belongs to the thioredoxin family.

It localises to the mitochondrion. This chain is Thioredoxin-3, mitochondrial (TRX3), found in Saccharomyces cerevisiae (strain ATCC 204508 / S288c) (Baker's yeast).